The following is an 89-amino-acid chain: Small ribosomal subunit protein uS15 (89 aa).

This sequence belongs to the universal ribosomal protein uS15 family. Part of the 30S ribosomal subunit. Forms a bridge to the 50S subunit in the 70S ribosome, contacting the 23S rRNA.

Its function is as follows. One of the primary rRNA binding proteins, it binds directly to 16S rRNA where it helps nucleate assembly of the platform of the 30S subunit by binding and bridging several RNA helices of the 16S rRNA. Functionally, forms an intersubunit bridge (bridge B4) with the 23S rRNA of the 50S subunit in the ribosome. The protein is Small ribosomal subunit protein uS15 of Roseiflexus castenholzii (strain DSM 13941 / HLO8).